We begin with the raw amino-acid sequence, 230 residues long: Carbohydrate deacetylase (230 aa).

Histidine 59 and histidine 123 together coordinate Mg(2+).

It belongs to the YdjC deacetylase family. In terms of assembly, homodimer. Mg(2+) is required as a cofactor.

Its function is as follows. Probably catalyzes the deacetylation of acetylated carbohydrates an important step in the degradation of oligosaccharides. This is Carbohydrate deacetylase from Oceanobacillus iheyensis (strain DSM 14371 / CIP 107618 / JCM 11309 / KCTC 3954 / HTE831).